The primary structure comprises 170 residues: uncharacterized protein (170 aa).

A run of 5 helical transmembrane segments spans residues 21–41 (NISLFGCLLVLSAGIIFAAVL), 55–75 (AYTSVSIVLGTITTLPFTLLL), 86–106 (TGIAGLLYLAIGCSWLAYWLW), 117–137 (ISGVLVALEPLFGILFAVSLL), and 143–163 (FSAALGITIIMLATLGSTLLP). Residues 35 to 161 (IIFAAVLRWT…IMLATLGSTL (127 aa)) form the EamA domain.

This sequence belongs to the EamA transporter family.

It localises to the cell membrane. This is an uncharacterized protein from Haemophilus influenzae (strain ATCC 51907 / DSM 11121 / KW20 / Rd).